Here is a 559-residue protein sequence, read N- to C-terminus: Glutamine--tRNA ligase (559 aa).

Positions 44-54 (PEPNGYLHIGH) match the 'HIGH' region motif. Residues 45–47 (EPN) and 51–57 (HIGHAKS) each bind ATP. Residues aspartate 77 and tyrosine 222 each coordinate L-glutamine. ATP-binding positions include threonine 241 and 272–273 (RL). The 'KMSKS' region signature appears at 279-283 (LTSKR).

Belongs to the class-I aminoacyl-tRNA synthetase family. Monomer.

The protein resides in the cytoplasm. It carries out the reaction tRNA(Gln) + L-glutamine + ATP = L-glutaminyl-tRNA(Gln) + AMP + diphosphate. This Pasteurella multocida (strain Pm70) protein is Glutamine--tRNA ligase.